A 154-amino-acid chain; its full sequence is 6,7-dimethyl-8-ribityllumazine synthase (154 aa).

5-amino-6-(D-ribitylamino)uracil-binding positions include phenylalanine 22, 56–58 (AFE), and 80–82 (TVI). 85–86 (AT) is a (2S)-2-hydroxy-3-oxobutyl phosphate binding site. Histidine 88 functions as the Proton donor in the catalytic mechanism. 5-amino-6-(D-ribitylamino)uracil is bound at residue phenylalanine 113. (2S)-2-hydroxy-3-oxobutyl phosphate is bound at residue arginine 127.

Belongs to the DMRL synthase family. As to quaternary structure, forms an icosahedral capsid composed of 60 subunits, arranged as a dodecamer of pentamers.

The enzyme catalyses (2S)-2-hydroxy-3-oxobutyl phosphate + 5-amino-6-(D-ribitylamino)uracil = 6,7-dimethyl-8-(1-D-ribityl)lumazine + phosphate + 2 H2O + H(+). Its pathway is cofactor biosynthesis; riboflavin biosynthesis; riboflavin from 2-hydroxy-3-oxobutyl phosphate and 5-amino-6-(D-ribitylamino)uracil: step 1/2. In terms of biological role, catalyzes the formation of 6,7-dimethyl-8-ribityllumazine by condensation of 5-amino-6-(D-ribitylamino)uracil with 3,4-dihydroxy-2-butanone 4-phosphate. This is the penultimate step in the biosynthesis of riboflavin. This chain is 6,7-dimethyl-8-ribityllumazine synthase, found in Bacillus amyloliquefaciens (Bacillus velezensis).